The sequence spans 197 residues: CRISPR system CMR subunit Cmr7 1 (197 aa).

It belongs to the CRISPR system Cmr7 family. Possible homodimer. Part of the CMR ribonucleoprotein complex, consisting of crRNA plus Cmr1/Cmr2/Cmr3/Cmr4/Cmr5/Cmr6 at 1:1 and possibly 3 Cmr7 dimers. A Cmr2/Cmr3/Cmr7 subcomplex without crRNA can also be isolated. It does not cleave target RNA.

The protein resides in the cytoplasm. In terms of biological role, CRISPR (clustered regularly interspaced short palindromic repeat) is an adaptive immune system that provides protection against mobile genetic elements (viruses, transposable elements and conjugative plasmids). CRISPR clusters contain spacers, sequences complementary to antecedent mobile elements, and target invading nucleic acids. CRISPR clusters are transcribed and processed into CRISPR RNA (crRNA). The CMR complex degrades RNA complementary to the crRNA (target RNA) within UA dinucleotides, generating 3'-OH and 5'-phosphate ends. Activity is dependent on the 8 nt long 5' tag in the crRNA, an unpaired 3' flag on the target RNA, and is stimulated by ATP. Some cleavage of the guide crRNA can also be observed. This is CRISPR system CMR subunit Cmr7 1 (cmr7A) from Saccharolobus solfataricus (strain ATCC 35092 / DSM 1617 / JCM 11322 / P2) (Sulfolobus solfataricus).